We begin with the raw amino-acid sequence, 805 residues long: Acetyl-CoA decarbonylase/synthase complex subunit alpha 2 (805 aa).

The [4Fe-4S] cluster site is built by Cys-72, Cys-75, Cys-76, Cys-78, Cys-83, and Cys-93. Residue His-116 participates in CO binding. His-249, Cys-277, and Cys-322 together coordinate [Ni-4Fe-4S] cluster. 4Fe-4S ferredoxin-type domains follow at residues 407-435 (EEFKVYIDKCVKCGECMLACPEELDIPEA) and 445-474 (EYLEALHDVCIGCRRCEQVCKKEIPILNVL). Positions 416, 419, 422, 426, 454, 457, 460, and 464 each coordinate [4Fe-4S] cluster. Residues Cys-522, Cys-551, and Cys-586 each coordinate [Ni-4Fe-4S] cluster.

The protein belongs to the Ni-containing carbon monoxide dehydrogenase family. As to quaternary structure, heterotetramer of two alpha and two epsilon subunits. The ACDS complex is made up of alpha, epsilon, beta, gamma and delta subunits with a probable stoichiometry of (alpha(2)epsilon(2))(4)-beta(8)-(gamma(1)delta(1))(8). [4Fe-4S] cluster serves as cofactor. [Ni-4Fe-4S] cluster is required as a cofactor.

It catalyses the reaction CO + 2 oxidized [2Fe-2S]-[ferredoxin] + H2O = 2 reduced [2Fe-2S]-[ferredoxin] + CO2 + 2 H(+). The protein operates within one-carbon metabolism; methanogenesis from acetate. Part of the ACDS complex that catalyzes the reversible cleavage of acetyl-CoA, allowing growth on acetate as sole source of carbon and energy. The alpha-epsilon subcomponent functions as a carbon monoxide dehydrogenase. The sequence is that of Acetyl-CoA decarbonylase/synthase complex subunit alpha 2 from Methanosarcina acetivorans (strain ATCC 35395 / DSM 2834 / JCM 12185 / C2A).